Reading from the N-terminus, the 491-residue chain is Cytochrome P450 2F1 (491 aa).

C436 is a binding site for heme.

It belongs to the cytochrome P450 family. It depends on heme as a cofactor. Expressed in lung. Rarely detected in liver and placenta.

It localises to the endoplasmic reticulum membrane. It is found in the microsome membrane. The enzyme catalyses an organic molecule + reduced [NADPH--hemoprotein reductase] + O2 = an alcohol + oxidized [NADPH--hemoprotein reductase] + H2O + H(+). Functionally, may be involved in the metabolism of various pneumotoxicants including naphthalene. Is able to dealkylate ethoxycoumarin, propoxycoumarin, and pentoxyresorufin but possesses no activity toward ethoxyresorufin and only trace dearylation activity toward benzyloxyresorufin. Bioactivates 3-methylindole (3MI) by dehydrogenation to the putative electrophile 3-methylene-indolenine. This chain is Cytochrome P450 2F1 (CYP2F1), found in Homo sapiens (Human).